A 481-amino-acid polypeptide reads, in one-letter code: Protein FAM83E (481 aa).

The segment at 1–296 is DUF1669; that stretch reads MAASQLAALE…LYAASRPLSA (296 aa). A disordered region spans residues 351-481; that stretch reads KQETPTTTGP…ASGSGSGRRR (131 aa). The segment covering 371–385 has biased composition (low complexity); it reads RTRTTSGPPTRPSRS. Polar residues-rich tracts occupy residues 391-400 and 465-474; these read RLSQLSGSSD and NATTSDWASG.

The protein belongs to the FAM83 family. Directly interacts (via DUF1669) with CSNK1A1, CSNK1A1L, CSNK1D and CSNK1E. May interact with RAF1.

Its subcellular location is the cytoplasm. It localises to the perinuclear region. Functionally, may play a role in MAPK signaling. In Mus musculus (Mouse), this protein is Protein FAM83E.